The chain runs to 932 residues: LPS-assembly protein LptD (932 aa).

An N-terminal signal peptide occupies residues 1–33; sequence MALKSPAFRRKFPLLVTGGLLALQPLATSYAVA. A disordered region spans residues 54–87; it reads PVNNLPPRPVHEGAAVSSGTEAASEGETADRPML.

The protein belongs to the LptD family. Component of the lipopolysaccharide transport and assembly complex. Interacts with LptE and LptA.

Its subcellular location is the cell outer membrane. Together with LptE, is involved in the assembly of lipopolysaccharide (LPS) at the surface of the outer membrane. This Pseudomonas putida (strain GB-1) protein is LPS-assembly protein LptD.